Reading from the N-terminus, the 360-residue chain is MKASIISKLESLKERHEELEALLGEPSVINDQDKFRAYSKEYAQLEDVVKCFARWNWLNNNIEETQLLLDDPDMKEMAELEIEESKAEIENAEQQLQILLLPKDPNDEYNAYLEIRAGTGGDEAGIFAGDLFRMYSRYAESKRWRVEVLNANESEQGGYKEIIVKVNGEGVYGQLKFESGGHRVQRVPKTESQGRIHTSACTVAVMPELPENEMPEINPSDLRIDTYRSSGAGGQHVNTTDSAVRITHIPTGIVVECQDERSQHKNKAKALSVLASRIAQAEQERQAQAQADTRRNLLGSGDRSDKIRTYNYPQGRVTDHRINLTVYRLDEVMNGKIDELIQPIITEYQADQLAMLSEQN.

An N5-methylglutamine modification is found at Gln235. The segment at 284-312 (ERQAQAQADTRRNLLGSGDRSDKIRTYNY) is disordered.

Belongs to the prokaryotic/mitochondrial release factor family. In terms of processing, methylated by PrmC. Methylation increases the termination efficiency of RF1.

Its subcellular location is the cytoplasm. In terms of biological role, peptide chain release factor 1 directs the termination of translation in response to the peptide chain termination codons UAG and UAA. The polypeptide is Peptide chain release factor 1 (Histophilus somni (strain 129Pt) (Haemophilus somnus)).